We begin with the raw amino-acid sequence, 253 residues long: Adenosylcobinamide-GDP ribazoletransferase (253 aa).

4 helical membrane-spanning segments follow: residues Ile33 to Leu53, Ile106 to Leu126, Phe132 to Ile152, and Val178 to Phe198.

The protein belongs to the CobS family. It depends on Mg(2+) as a cofactor.

The protein resides in the cell membrane. It carries out the reaction alpha-ribazole + adenosylcob(III)inamide-GDP = adenosylcob(III)alamin + GMP + H(+). The enzyme catalyses alpha-ribazole 5'-phosphate + adenosylcob(III)inamide-GDP = adenosylcob(III)alamin 5'-phosphate + GMP + H(+). Its pathway is cofactor biosynthesis; adenosylcobalamin biosynthesis; adenosylcobalamin from cob(II)yrinate a,c-diamide: step 7/7. In terms of biological role, joins adenosylcobinamide-GDP and alpha-ribazole to generate adenosylcobalamin (Ado-cobalamin). Also synthesizes adenosylcobalamin 5'-phosphate from adenosylcobinamide-GDP and alpha-ribazole 5'-phosphate. The protein is Adenosylcobinamide-GDP ribazoletransferase of Saccharolobus islandicus (strain Y.G.57.14 / Yellowstone #1) (Sulfolobus islandicus).